A 97-amino-acid chain; its full sequence is Putative membrane protein insertion efficiency factor (97 aa).

This sequence belongs to the UPF0161 family.

The protein localises to the cell membrane. Its function is as follows. Could be involved in insertion of integral membrane proteins into the membrane. This chain is Putative membrane protein insertion efficiency factor, found in Lactobacillus helveticus (strain DPC 4571).